A 112-amino-acid polypeptide reads, in one-letter code: Small ribosomal subunit protein bS16 (112 aa).

It belongs to the bacterial ribosomal protein bS16 family.

This chain is Small ribosomal subunit protein bS16, found in Karelsulcia muelleri (strain GWSS) (Sulcia muelleri).